The primary structure comprises 486 residues: Cardiolipin synthase A (486 aa).

2 consecutive transmembrane segments (helical) span residues 3–23 (TFYT…IAGV) and 38–58 (MAWL…YLSF). 2 PLD phosphodiesterase domains span residues 219 to 246 (MDLR…VDPR) and 399 to 426 (EDGL…DMRS). Residues histidine 224, lysine 226, aspartate 231, histidine 404, lysine 406, and aspartate 411 contribute to the active site.

Belongs to the phospholipase D family. Cardiolipin synthase subfamily. ClsA sub-subfamily.

Its subcellular location is the cell inner membrane. It catalyses the reaction 2 a 1,2-diacyl-sn-glycero-3-phospho-(1'-sn-glycerol) = a cardiolipin + glycerol. Catalyzes the reversible phosphatidyl group transfer from one phosphatidylglycerol molecule to another to form cardiolipin (CL) (diphosphatidylglycerol) and glycerol. The protein is Cardiolipin synthase A of Serratia proteamaculans (strain 568).